The chain runs to 27 residues: Carcinustatin-20 (27 aa).

Leucine 27 is modified (leucine amide).

The protein belongs to the allatostatin family.

The protein resides in the secreted. In terms of biological role, may act as a neurotransmitter or neuromodulator. The protein is Carcinustatin-20 of Carcinus maenas (Common shore crab).